Reading from the N-terminus, the 310-residue chain is Putative S-adenosyl-L-methionine-dependent methyltransferase Franean1_4929 (310 aa).

The tract at residues 1 to 28 (MSRPSAPRGRTELRSIHERGHERGSAGV) is disordered. A compositionally biased stretch (basic and acidic residues) spans 9-24 (GRTELRSIHERGHERG). Residues aspartate 136 and 165 to 166 (DL) contribute to the S-adenosyl-L-methionine site.

Belongs to the UPF0677 family.

Functionally, exhibits S-adenosyl-L-methionine-dependent methyltransferase activity. This is Putative S-adenosyl-L-methionine-dependent methyltransferase Franean1_4929 from Parafrankia sp. (strain EAN1pec).